Reading from the N-terminus, the 317-residue chain is L-lactate dehydrogenase 1 (317 aa).

Residues Val-17, Asp-38, Lys-43, Tyr-69, and 83 to 84 (GA) each bind NAD(+). Substrate contacts are provided by Gln-86 and Arg-92. Residues Ser-105, 122–124 (ATN), and Ser-147 contribute to the NAD(+) site. Residue 124-127 (NPVD) participates in substrate binding. 152 to 155 (DSAR) contacts substrate. The active-site Proton acceptor is the His-179. A Phosphotyrosine modification is found at Tyr-223. Thr-232 is a substrate binding site.

This sequence belongs to the LDH/MDH superfamily. LDH family. In terms of assembly, homotetramer.

The protein resides in the cytoplasm. The catalysed reaction is (S)-lactate + NAD(+) = pyruvate + NADH + H(+). It participates in fermentation; pyruvate fermentation to lactate; (S)-lactate from pyruvate: step 1/1. Functionally, catalyzes the conversion of lactate to pyruvate (Potential). Appears to be the primary factor that allows S.aureus growth during nitrosative stress in both aerobically and anaerobically cultured cells. This chain is L-lactate dehydrogenase 1, found in Staphylococcus aureus (strain MRSA252).